We begin with the raw amino-acid sequence, 310 residues long: Oxygen-dependent coproporphyrinogen-III oxidase (310 aa).

Ser92 serves as a coordination point for substrate. The a divalent metal cation site is built by His96 and His106. His106 functions as the Proton donor in the catalytic mechanism. Position 108-110 (108-110 (NVR)) interacts with substrate. Residues His145 and His175 each coordinate a divalent metal cation. The important for dimerization stretch occupies residues 240–275 (YVEFNLIWDRGTLFGLQSGGRTESILMSMPPLARWE). Residue 258 to 260 (GGR) coordinates substrate.

It belongs to the aerobic coproporphyrinogen-III oxidase family. In terms of assembly, homodimer. The cofactor is a divalent metal cation.

The protein localises to the cytoplasm. The catalysed reaction is coproporphyrinogen III + O2 + 2 H(+) = protoporphyrinogen IX + 2 CO2 + 2 H2O. It participates in porphyrin-containing compound metabolism; protoporphyrin-IX biosynthesis; protoporphyrinogen-IX from coproporphyrinogen-III (O2 route): step 1/1. In terms of biological role, involved in the heme biosynthesis. Catalyzes the aerobic oxidative decarboxylation of propionate groups of rings A and B of coproporphyrinogen-III to yield the vinyl groups in protoporphyrinogen-IX. The sequence is that of Oxygen-dependent coproporphyrinogen-III oxidase from Pectobacterium carotovorum subsp. carotovorum (strain PC1).